We begin with the raw amino-acid sequence, 338 residues long: DNA-directed RNA polymerase subunit alpha (338 aa).

The segment at 1 to 226 (MLIAQRPTLS…ELFGLARELN (226 aa)) is alpha N-terminal domain (alpha-NTD). Residues 240 to 338 (DEQLAADLAL…DDAFVEDEQY (99 aa)) form an alpha C-terminal domain (alpha-CTD) region.

It belongs to the RNA polymerase alpha chain family. As to quaternary structure, homodimer. The RNAP catalytic core consists of 2 alpha, 1 beta, 1 beta' and 1 omega subunit. When a sigma factor is associated with the core the holoenzyme is formed, which can initiate transcription.

It catalyses the reaction RNA(n) + a ribonucleoside 5'-triphosphate = RNA(n+1) + diphosphate. Its function is as follows. DNA-dependent RNA polymerase catalyzes the transcription of DNA into RNA using the four ribonucleoside triphosphates as substrates. In Nocardioides sp. (strain ATCC BAA-499 / JS614), this protein is DNA-directed RNA polymerase subunit alpha.